The following is a 556-amino-acid chain: Urocanate hydratase (556 aa).

NAD(+) contacts are provided by residues 52–53 (GG), Gln-130, 176–178 (GMG), Glu-196, Arg-201, 242–243 (NA), 263–267 (QTSAH), 273–274 (YL), and Tyr-322. The active site involves Cys-410. An NAD(+)-binding site is contributed by Gly-492.

It belongs to the urocanase family. It depends on NAD(+) as a cofactor.

The protein localises to the cytoplasm. The enzyme catalyses 4-imidazolone-5-propanoate = trans-urocanate + H2O. Its pathway is amino-acid degradation; L-histidine degradation into L-glutamate; N-formimidoyl-L-glutamate from L-histidine: step 2/3. Functionally, catalyzes the conversion of urocanate to 4-imidazolone-5-propionate. In Shewanella piezotolerans (strain WP3 / JCM 13877), this protein is Urocanate hydratase.